A 437-amino-acid chain; its full sequence is Trigger factor (437 aa).

In terms of domain architecture, PPIase FKBP-type spans 161-246; sequence GDQVNINFVG…VNSVSEAVLP (86 aa).

Belongs to the FKBP-type PPIase family. Tig subfamily.

It is found in the cytoplasm. The catalysed reaction is [protein]-peptidylproline (omega=180) = [protein]-peptidylproline (omega=0). Its function is as follows. Involved in protein export. Acts as a chaperone by maintaining the newly synthesized protein in an open conformation. Functions as a peptidyl-prolyl cis-trans isomerase. The protein is Trigger factor of Cellvibrio japonicus (strain Ueda107) (Pseudomonas fluorescens subsp. cellulosa).